The following is a 672-amino-acid chain: Hydrogenase-4 component B (672 aa).

The Periplasmic segment spans residues 1-5; the sequence is MDALQ. The helical transmembrane segment at 6–26 threads the bilayer; it reads LLTWSLILYLFASLASLFLLG. The Cytoplasmic segment spans residues 27 to 30; that stretch reads LDRL. The helical transmembrane segment at 31–51 threads the bilayer; sequence AIKLSGITSLVGGVIGIISGI. Over 52–79 the chain is Periplasmic; sequence TQLHAGVTLVARFAPPFEFADLTLRMDS. A helical transmembrane segment spans residues 80–100; it reads LSAFMVLVISLLVVVCSLYSL. At 101–119 the chain is on the cytoplasmic side; sequence TYMREYEGKGAAAMGFFMN. A helical membrane pass occupies residues 120–140; sequence IFIASMVALLVMDNAFWFIVL. The Periplasmic segment spans residues 141 to 164; it reads FEMMSLSSWFLVIARQDKTSINAG. Residues 165 to 185 traverse the membrane as a helical segment; it reads MLYFFIAHAGSVLIMIAFLLM. The Cytoplasmic segment spans residues 186 to 199; it reads GRESGSLDFASFRT. The helical transmembrane segment at 200-220 threads the bilayer; that stretch reads LSLSPGLASAVFLLAFFGFGA. The Periplasmic portion of the chain corresponds to 221–242; sequence KAGMMPLHSWLPRAHPAAPSHA. A helical membrane pass occupies residues 243-263; that stretch reads SALMSGVMVKIGIFGILKVAM. The Cytoplasmic segment spans residues 264 to 272; that stretch reads DLLAQTGLP. A helical membrane pass occupies residues 273–293; it reads LWWGILVMAIGAISALLGVLY. At 294–311 the chain is on the periplasmic side; that stretch reads ALAEQDIKRLLAWSTVEN. The helical transmembrane segment at 312–332 threads the bilayer; that stretch reads VGIILLAVGVAMVGLSLHDPL. The Cytoplasmic segment spans residues 333-342; the sequence is LTVVGLLGAL. Residues 343–363 traverse the membrane as a helical segment; that stretch reads FHLLNHALFKGLLFLGAGAII. Residues 364 to 384 lie on the Periplasmic side of the membrane; the sequence is SRLHTHDMEKMGALAKRMPWT. Residues 385-405 form a helical membrane-spanning segment; that stretch reads AAACLIGCLAISAIPPLNGFI. Residues 406–427 lie on the Cytoplasmic side of the membrane; it reads SEWYTWQSLFSLSRVEAVALQL. Residues 428–448 form a helical membrane-spanning segment; the sequence is AGPIAMVMLAVTGGLAVMCFV. Residues 449–474 lie on the Periplasmic side of the membrane; it reads KMYGITFCGAPRSTHAEEAQEVPNTM. The chain crosses the membrane as a helical span at residues 475–495; the sequence is IVAMLLLAALCVLIALSASWL. Residues 496-504 are Cytoplasmic-facing; sequence APKIMHIAH. The helical transmembrane segment at 505–525 threads the bilayer; that stretch reads AFTNTPPATVASGIALVPGTF. Residues 526–531 are Periplasmic-facing; the sequence is HTQVTP. Residues 532-552 form a helical membrane-spanning segment; the sequence is SLLLLLLLAMPLLPGLYWLWC. The Cytoplasmic segment spans residues 553–651; the sequence is RSRRAAFRRT…KEIQHLQSGD (99 aa). Residues 652-672 traverse the membrane as a helical segment; that stretch reads FRLYCLYVVAALVVLLIAIAV.

It belongs to the complex I subunit 5 family.

It localises to the cell inner membrane. Its function is as follows. Possible component of hydrogenase 4. In Escherichia coli (strain K12), this protein is Hydrogenase-4 component B.